Consider the following 201-residue polypeptide: Troponin I (201 aa).

A1 is subject to N-acetylalanine. The span at 1 to 33 (ADKAKAAEEAKKKQDDIDRKKAEVRKRLEEQSL) shows a compositional bias: basic and acidic residues. The tract at residues 1–45 (ADKAKAAEEAKKKQDDIDRKKAEVRKRLEEQSLKKQKKGFMTPER) is disordered. The troponin T-interaction stretch occupies residues 108–117 (IESDKYDVEL). The segment at 135-148 (DLRGKFIKPTLKKV) is actin-binding. 2 positions are modified to N6,N6,N6-trimethyllysine: K142 and K146. Residues 182–201 (EDDKGATEGDGPAAEEVAAE) are disordered.

This sequence belongs to the troponin I family.

In terms of biological role, troponin I is the actomyosin ATPase inhibitory subunit present in the thin filament regulatory complex. The protein is Troponin I of Astacus leptodactylus (Turkish narrow-clawed crayfish).